The following is a 2181-amino-acid chain: Non-reducing polyketide synthase dpmaA (2181 aa).

Residues 74–180 (QWVKGNSTQP…LALCCGAYID (107 aa)) are N-terminal acylcarrier protein transacylase domain (SAT). Positions 347–779 (QAQLLVLGPV…GTNAAMLVCQ (433 aa)) constitute a Ketosynthase family 3 (KS3) domain. Active-site for beta-ketoacyl synthase activity residues include C525, H661, and H702. The segment at 891 to 1193 (VLAGQTGRRV…SFYPAALGEP (303 aa)) is malonyl-CoA:ACP transacylase (MAT) domain. S977 functions as the For acyl/malonyl transferase activity in the catalytic mechanism. The tract at residues 1269–1401 (VSLIGKTQNA…GVITLQEVYS (133 aa)) is N-terminal hotdog fold. Residues 1269–1579 (VSLIGKTQNA…FQKIAISSLK (311 aa)) form the PKS/mFAS DH domain. Positions 1276 to 1573 (QNAGVQTVEY…TILGAKFQKI (298 aa)) are product template (PT) domain. Residues 1425 to 1579 (SASVVQGDFI…FQKIAISSLK (155 aa)) are C-terminal hotdog fold. Over residues 1587-1603 (GVPQTSGGRTPSSSITE) the composition is skewed to polar residues. 2 disordered regions span residues 1587-1618 (GVPQ…PIPG) and 1652-1675 (ISGS…AMET). Over residues 1653 to 1670 (SGSSRSTSSSPPSLESRS) the composition is skewed to low complexity. A Carrier domain is found at 1677–1753 (EITEGAGSAL…TLFHTIFPQQ (77 aa)). S1713 is modified (O-(pantetheine 4'-phosphoryl)serine). The interval 1982–2164 (EFMNCLFSYN…QSGFDHIDWT (183 aa)) is methyltransferase (CMeT) domain.

The protein operates within secondary metabolite biosynthesis; terpenoid biosynthesis. Non-reducing polyketide synthase; part of the gene cluster that mediates the biosynthesis of the diterpenoid pyrones subglutinols A and B. The first step of the pathway is the synthesis of the alpha-pyrone moiety by the polyketide synthase dpmaA via condensation of one acetyl-CoA starter unit with 3 malonyl-CoA units and 2 methylations. The alpha-pyrone is then combined with geranylgeranyl pyrophosphate (GGPP) formed by the GGPP synthase dpmaD through the action of the prenyltransferase dpmaC to yield a linear alpha-pyrone diterpenoid. Subsequent steps in the diterpenoid pyrone biosynthetic pathway involve the decalin core formation, which is initiated by the epoxidation of the C10-C11 olefin by the FAD-dependent oxidoreductase dpmaE, and is followed by a cyclization cascade catalyzed by the terpene cyclase dpmaB. The dehydrogenase dpmaF is then involved in tetrahydrofuran (THF) ring formation at the C5 unit to complete the formation of subglutinols A and B. This is Non-reducing polyketide synthase dpmaA from Metarhizium anisopliae (Entomophthora anisopliae).